Reading from the N-terminus, the 330-residue chain is Low affinity immunoglobulin gamma Fc region receptor II (330 aa).

The N-terminal stretch at 1-29 is a signal peptide; it reads MESNWTVHVFSRTLCHMLLWTAVLNLAAG. Over 30–210 the chain is Extracellular; it reads THDLPKAVVK…QGPKSSRSLP (181 aa). 2 Ig-like C2-type domains span residues 50-106 and 131-189; these read EDTV…QTRL and GETI…LGRT. Cystine bridges form between Cys57–Cys99 and Cys138–Cys182. N-linked (GlcNAc...) asparagine glycosylation is found at Asn65, Asn92, Asn166, and Asn173. The chain crosses the membrane as a helical span at residues 211 to 231; that stretch reads VLTIVAAVTGIAVAAIVIILV. Residues 232–330 are Cytoplasmic-facing; sequence SLVYLKKKQV…ETEHDYQNHI (99 aa). The segment at 261–330 is disordered; the sequence is VGEYRQPSGG…ETEHDYQNHI (70 aa). Tyr290 carries the post-translational modification Phosphotyrosine. The short motif at 307–312 is the ITIM motif element; that stretch reads ITYSLL. Phosphotyrosine; by SRC-type Tyr-kinases is present on Tyr309. Tyr326 is modified (phosphotyrosine).

As to quaternary structure, interacts with FGR. Interacts with LYN. Glycosylated. Post-translationally, when coaggregated to BCR, isoform IIB1 and isoform IIB1' become tyrosine phosphorylated and bind to the SH2 domains of the protein tyrosine phosphatase PTPC1. Phosphorylated by SRC-type Tyr-kinases such as LYN, BLK, FYN and SYK. In terms of tissue distribution, widely expressed by cells of hemopoietic origin. The isoforms are differentially expressed. Isoform IIB1 is preferentially expressed by cells of the lymphoid lineage, isoform IIB2 by cells of the myeloid lineage, and isoform IIB3 is released by macrophages and is present in the serum. Isoform IIB1' is expressed in myeloid and lymphoid cell lines, in normal spleen cells, and in resting or LPS-activated B-cells but is not detected in mesenteric lymph node cells.

The protein localises to the cell membrane. The protein resides in the cytoplasm. It localises to the cytoskeleton. Its subcellular location is the secreted. In terms of biological role, receptor for the Fc region of complexed immunoglobulins gamma. Low affinity receptor. Involved in a variety of effector and regulatory functions such as phagocytosis of antigen-antibody complexes from the circulation and modulation of antibody production by B-cells. Isoform IIB1 and isoform IIB1' form caps but fail to mediate endocytosis or phagocytosis. Isoform IIB2 can mediate the endocytosis of soluble immune complexes via clathrin-coated pits. Isoform IIB1 and isoform IIB2 can down-regulate B-cell, T-cell, and mast cell activation when coaggregated to B-cell receptors for AG (BCR), T-cell receptors for AG (TCR), and Fc receptors, respectively. This chain is Low affinity immunoglobulin gamma Fc region receptor II (Fcgr2), found in Mus musculus (Mouse).